The primary structure comprises 122 residues: ATP-dependent Clp protease adapter protein ClpS (122 aa).

The tract at residues 1 to 33 (MHAPSQIRLTFNQDHPEPHEHEDEGAGLAVQES) is disordered. Positions 14–24 (DHPEPHEHEDE) are enriched in basic and acidic residues.

Belongs to the ClpS family. As to quaternary structure, binds to the N-terminal domain of the chaperone ClpA.

Involved in the modulation of the specificity of the ClpAP-mediated ATP-dependent protein degradation. This chain is ATP-dependent Clp protease adapter protein ClpS, found in Pseudomonas aeruginosa (strain ATCC 15692 / DSM 22644 / CIP 104116 / JCM 14847 / LMG 12228 / 1C / PRS 101 / PAO1).